The chain runs to 154 residues: SsrA-binding protein (154 aa).

Residues 134–154 form a disordered region; it reads QREDLKRRAEDRDTQRELARF.

Belongs to the SmpB family.

Its subcellular location is the cytoplasm. In terms of biological role, required for rescue of stalled ribosomes mediated by trans-translation. Binds to transfer-messenger RNA (tmRNA), required for stable association of tmRNA with ribosomes. tmRNA and SmpB together mimic tRNA shape, replacing the anticodon stem-loop with SmpB. tmRNA is encoded by the ssrA gene; the 2 termini fold to resemble tRNA(Ala) and it encodes a 'tag peptide', a short internal open reading frame. During trans-translation Ala-aminoacylated tmRNA acts like a tRNA, entering the A-site of stalled ribosomes, displacing the stalled mRNA. The ribosome then switches to translate the ORF on the tmRNA; the nascent peptide is terminated with the 'tag peptide' encoded by the tmRNA and targeted for degradation. The ribosome is freed to recommence translation, which seems to be the essential function of trans-translation. In Nitratidesulfovibrio vulgaris (strain ATCC 29579 / DSM 644 / CCUG 34227 / NCIMB 8303 / VKM B-1760 / Hildenborough) (Desulfovibrio vulgaris), this protein is SsrA-binding protein.